The primary structure comprises 270 residues: Bis(5'-nucleosyl)-tetraphosphatase, symmetrical (270 aa).

This sequence belongs to the Ap4A hydrolase family.

It catalyses the reaction P(1),P(4)-bis(5'-adenosyl) tetraphosphate + H2O = 2 ADP + 2 H(+). In terms of biological role, hydrolyzes diadenosine 5',5'''-P1,P4-tetraphosphate to yield ADP. The chain is Bis(5'-nucleosyl)-tetraphosphatase, symmetrical from Thioalkalivibrio sulfidiphilus (strain HL-EbGR7).